A 330-amino-acid polypeptide reads, in one-letter code: MAAGFLFHMGSLPAIATVGHKSKVLVIGGTGYLGKRLVTASLAAGHETYVLQRPEIGVDIEKIQLLLSFKKAGASLVSGSFNDYRSLVDAVKLVDVVICAVSGVHIRSHQILLQLKLVDAIKEAGNVKRFLPSEFGTDPATMENAMEPGRVTFDDKMVVRKAIEEAGIPFTYISANCFAGYFLGGLCQPGFILPSREQVTLLGDGNQKAVYVDEDDIARYTIKMIDDPRTLNKTVYIKPPKNVLSQREVVGIWEKYIGKELKKTTLSVEEFLAMMKEQDYAEQVGLTHYYHVCYEGCLTNFEIGDEAGEATKLYPEVGYTTVVEYMKRYV.

NADP(+) is bound by residues 28–34, R53, and K62; that span reads GGTGYLG. Residue K156 is the Proton acceptor of the active site. R160 contacts NADP(+). Residue H288 participates in substrate binding.

The protein belongs to the NmrA-type oxidoreductase family. Isoflavone reductase subfamily. In terms of assembly, dimer. Expressed in leaves, stems, leaves and seeds.

It catalyses the reaction (+)-lariciresinol + NADP(+) = (+)-pinoresinol + NADPH + H(+). It carries out the reaction (-)-secoisolariciresinol + NADP(+) = (+)-lariciresinol + NADPH + H(+). Reductase involved in lignan biosynthesis. Catalyzes the enantioselective conversion of (+)-pinoresinol into (+)-lariciresinol and of (+)-lariciresinol into (-)-secoisolariciresinol. Abstracts the 4R-hydride from the NADPH cofactor during catalysis. In Linum usitatissimum (Flax), this protein is Bifunctional pinoresinol-lariciresinol reductase 2 (PLR_Lu2).